The following is a 74-amino-acid chain: Conotoxin MiK41 (74 aa).

Positions 1 to 22 (MKLTCVLIITVLFLTACQLTTA) are cleaved as a signal peptide. A propeptide spanning residues 23-45 (VTYSRGEHKHRALMSTGTNYRLP) is cleaved from the precursor. 3 cysteine pairs are disulfide-bonded: C48/C62, C55/C66, and C61/C73.

It belongs to the conotoxin O1 superfamily. In terms of tissue distribution, expressed by the venom duct.

The protein resides in the secreted. This is Conotoxin MiK41 from Conus miles (Soldier cone).